The primary structure comprises 638 residues: Zinc finger protein 143 (638 aa).

M1 is modified (N-acetylmethionine). K213 participates in a covalent cross-link: Glycyl lysine isopeptide (Lys-Gly) (interchain with G-Cter in SUMO2). 4 C2H2-type zinc fingers span residues F237–H261, Y267–H291, Y297–H321, and F327–H351. At T352 the chain carries Phosphothreonine. C2H2-type zinc fingers lie at residues Y357 to H381, Y387 to H411, and Y417 to H440. K406 is covalently cross-linked (Glycyl lysine isopeptide (Lys-Gly) (interchain with G-Cter in SUMO2)).

This sequence belongs to the GLI C2H2-type zinc-finger protein family. In terms of assembly, interacts with CHD8. Forms a complex with HCFC1 and ZNF143. As to expression, expressed in all tissues tested, with the strongest expression in ovary.

It is found in the nucleus. In terms of biological role, transcriptional activator. Activates the gene for selenocysteine tRNA (tRNAsec). Binds to the SPH motif of small nuclear RNA (snRNA) gene promoters. Participates in efficient U6 RNA polymerase III transcription via its interaction with CHD8. In complex with HCFC1 and ZNF143, regulates the expression of several genes, including AP2S1, ESCO2, OPHN1, RBL1, UBXN8 and ZNF32. The polypeptide is Zinc finger protein 143 (ZNF143) (Homo sapiens (Human)).